The chain runs to 214 residues: Large ribosomal subunit protein bL25 (214 aa).

Positions 194-214 (TTEAEETAEPEVIRRKEEEEE) are disordered. Residues 204–214 (EVIRRKEEEEE) are compositionally biased toward basic and acidic residues.

It belongs to the bacterial ribosomal protein bL25 family. CTC subfamily. As to quaternary structure, part of the 50S ribosomal subunit; part of the 5S rRNA/L5/L18/L25 subcomplex. Contacts the 5S rRNA. Binds to the 5S rRNA independently of L5 and L18.

In terms of biological role, this is one of the proteins that binds to the 5S RNA in the ribosome where it forms part of the central protuberance. This chain is Large ribosomal subunit protein bL25, found in Thermotoga petrophila (strain ATCC BAA-488 / DSM 13995 / JCM 10881 / RKU-1).